We begin with the raw amino-acid sequence, 421 residues long: UDP-N-acetylglucosamine 1-carboxyvinyltransferase (421 aa).

22–23 (KN) provides a ligand contact to phosphoenolpyruvate. R92 lines the UDP-N-acetyl-alpha-D-glucosamine pocket. Residue C116 is the Proton donor of the active site. A 2-(S-cysteinyl)pyruvic acid O-phosphothioketal modification is found at C116. UDP-N-acetyl-alpha-D-glucosamine contacts are provided by D307 and V329.

This sequence belongs to the EPSP synthase family. MurA subfamily.

Its subcellular location is the cytoplasm. It catalyses the reaction phosphoenolpyruvate + UDP-N-acetyl-alpha-D-glucosamine = UDP-N-acetyl-3-O-(1-carboxyvinyl)-alpha-D-glucosamine + phosphate. Its pathway is cell wall biogenesis; peptidoglycan biosynthesis. Cell wall formation. Adds enolpyruvyl to UDP-N-acetylglucosamine. This Kosmotoga olearia (strain ATCC BAA-1733 / DSM 21960 / TBF 19.5.1) protein is UDP-N-acetylglucosamine 1-carboxyvinyltransferase.